Reading from the N-terminus, the 377-residue chain is S-adenosylmethionine decarboxylase proenzyme 2 (377 aa).

Residues Glu-24 and Glu-27 contribute to the active site. The active-site Schiff-base intermediate with substrate; via pyruvic acid is Ser-84. Ser-84 carries the post-translational modification Pyruvic acid (Ser); by autocatalysis. Cys-98 functions as the Proton donor; for catalytic activity in the catalytic mechanism. Residues Ser-246 and His-259 each act as proton acceptor; for processing activity in the active site.

It belongs to the eukaryotic AdoMetDC family. The cofactor is pyruvate. Is synthesized initially as an inactive proenzyme. Formation of the active enzyme involves a self-maturation process in which the active site pyruvoyl group is generated from an internal serine residue via an autocatalytic post-translational modification. Two non-identical subunits are generated from the proenzyme in this reaction, and the pyruvate is formed at the N-terminus of the alpha chain, which is derived from the carboxyl end of the proenzyme. The post-translation cleavage follows an unusual pathway, termed non-hydrolytic serinolysis, in which the side chain hydroxyl group of the serine supplies its oxygen atom to form the C-terminus of the beta chain, while the remainder of the serine residue undergoes an oxidative deamination to produce ammonia and the pyruvoyl group blocking the N-terminus of the alpha chain.

It carries out the reaction S-adenosyl-L-methionine + H(+) = S-adenosyl 3-(methylsulfanyl)propylamine + CO2. It participates in amine and polyamine biosynthesis; S-adenosylmethioninamine biosynthesis; S-adenosylmethioninamine from S-adenosyl-L-methionine: step 1/1. This chain is S-adenosylmethionine decarboxylase proenzyme 2 (SAMDC2), found in Dianthus caryophyllus (Carnation).